We begin with the raw amino-acid sequence, 352 residues long: GTPase Obg (352 aa).

The Obg domain occupies 1 to 159 (MHFLDQAKIF…MYVWLRLKLL (159 aa)). The segment at 122-142 (DGGRGNASYKTSTNRAPRQHG) is disordered. Residues 160 to 328 (ADAGLVGLPN…LLDAVLEYLP (169 aa)) form the OBG-type G domain. GTP-binding positions include 166 to 173 (GLPNAGKS), 191 to 195 (FTTLR), 212 to 215 (DIPG), 280 to 283 (NKID), and 309 to 311 (SGA). Positions 173 and 193 each coordinate Mg(2+).

The protein belongs to the TRAFAC class OBG-HflX-like GTPase superfamily. OBG GTPase family. As to quaternary structure, monomer. Mg(2+) is required as a cofactor.

It is found in the cytoplasm. In terms of biological role, an essential GTPase which binds GTP, GDP and possibly (p)ppGpp with moderate affinity, with high nucleotide exchange rates and a fairly low GTP hydrolysis rate. Plays a role in control of the cell cycle, stress response, ribosome biogenesis and in those bacteria that undergo differentiation, in morphogenesis control. This is GTPase Obg from Novosphingobium aromaticivorans (strain ATCC 700278 / DSM 12444 / CCUG 56034 / CIP 105152 / NBRC 16084 / F199).